The primary structure comprises 289 residues: Mitochondrial fission regulator 1-like (289 aa).

Thr27 carries the phosphothreonine modification. A phosphoserine mark is found at Ser38, Ser100, Ser107, Ser221, Ser222, Ser235, Ser258, and Ser270.

It belongs to the MTFR1 family. Post-translationally, phosphorylated by AMPK. Upon stress, phosphorylation by AMPK is sufficient to induce mitochondrial fragmentation.

The protein resides in the mitochondrion outer membrane. Its function is as follows. Mitochondrial protein required for adaptation of miochondrial dynamics to metabolic changes. Regulates mitochondrial morphology at steady state and mediates AMPK-dependent stress-induced mitochondrial fragmentation via the control of OPA1 levels. The protein is Mitochondrial fission regulator 1-like (MTFR1L) of Bos taurus (Bovine).